Here is a 1037-residue protein sequence, read N- to C-terminus: Probable inorganic carbon transporter subunit DabA 2 (1037 aa).

4 residues coordinate Zn(2+): Cys460, Asp462, His719, and Cys734.

The protein belongs to the inorganic carbon transporter (TC 9.A.2) DabA family. Forms a complex with DabB. The cofactor is Zn(2+).

It is found in the cell inner membrane. Its function is as follows. Part of an energy-coupled inorganic carbon pump. The sequence is that of Probable inorganic carbon transporter subunit DabA 2 from Nitrobacter winogradskyi (strain ATCC 25391 / DSM 10237 / CIP 104748 / NCIMB 11846 / Nb-255).